The sequence spans 591 residues: MFGKRKKRVEISAPSNFEHRVHTGFDQHEQKFTGLPRQWQSLIEESARRPKPLVDPACITSIQPGAPKTIVRGSKGAKDGALTLLLDEFENMSVTRSNSLRRDSPPPPARARQENGMPEEPATTARGGPGKAGSRGRFAGHSEAGGGSGDRRRAGPEKRPKSSREGSGGPQESSRDKRPLSGPDVGTPQPAGLASGAKLAAGRPFNTYPRADTDHPSRGAQGEPHDVAPNGPSAGGLAIPQSSSSSSRPPTRARGAPSPGVLGPHASEPQLAPPACTPAAPAVPGPPGPRSPQREPQRVSHEQFRAALQLVVDPGDPRSYLDNFIKIGEGSTGIVCIATVRSSGKLVAVKKMDLRKQQRRELLFNEVVIMRDYQHENVVEMYNSYLVGDELWVVMEFLEGGALTDIVTHTRMNEEQIAAVCLAVLQALSVLHAQGVIHRDIKSDSILLTHDGRVKLSDFGFCAQVSKEVPRRKSLVGTPYWMAPELISRLPYGPEVDIWSLGIMVIEMVDGEPPYFNEPPLKAMKMIRDNLPPRLKNLHKVSPSLKGFLDRLLVRDPAQRATAAELLKHPFLAKAGPPASIVPLMRQNRTR.

The 14-residue stretch at isoleucine 11–glycine 24 folds into the CRIB domain. The interval phenylalanine 25–tyrosine 320 is linker. Residue serine 41 is modified to Phosphoserine. Lysine 78 carries the N6-methyllysine modification. Positions threonine 95 to histidine 301 are disordered. Serine 104 and serine 148 each carry phosphoserine. Positions glycine 149–arginine 164 are enriched in basic and acidic residues. Residues serine 167 and serine 181 each carry the phosphoserine modification. Threonine 187 carries the phosphothreonine modification. Residues alanine 191–glycine 202 show a composition bias toward low complexity. Phosphoserine is present on serine 195. Position 207 is a phosphothreonine (threonine 207). The segment covering serine 242–glycine 260 has biased composition (low complexity). Phosphoserine occurs at positions 258 and 267. Over residues leucine 271–arginine 290 the composition is skewed to pro residues. Serine 291 carries the phosphoserine modification. The span at proline 292–histidine 301 shows a compositional bias: basic and acidic residues. A GEF-interaction domain (GID) region spans residues arginine 298 to asparagine 323. Residues leucine 321–leucine 572 form the Protein kinase domain. ATP-binding positions include isoleucine 327 to valine 335, lysine 350, and glutamate 396 to leucine 398. Aspartate 440 serves as the catalytic Proton acceptor. An ATP-binding site is contributed by aspartate 458 to glycine 460. Phosphoserine; by autocatalysis is present on serine 474.

The protein belongs to the protein kinase superfamily. STE Ser/Thr protein kinase family. STE20 subfamily. In terms of assembly, interacts with FGFR2 and GRB2. Interacts tightly with GTP-bound but not GDP-bound CDC42/p21 and weakly with RAC1. Interacts with INKA1. Interacts with SH3RF2. Interacts with RHOU and PAXI; the PAK4-RHOU complex protects RHOU from ubiquitination and acts as a scaffold to suppport paxillin/PAXI phosphorylation. Post-translationally, autophosphorylated on serine residues when activated by CDC42/p21. Phosphorylated on tyrosine residues upon stimulation of FGFR2. Methylated by SETD6. Polyubiquitinated, leading to its proteasomal degradation. In terms of tissue distribution, highest expression in prostate, testis and colon.

The protein localises to the cytoplasm. The enzyme catalyses L-seryl-[protein] + ATP = O-phospho-L-seryl-[protein] + ADP + H(+). It carries out the reaction L-threonyl-[protein] + ATP = O-phospho-L-threonyl-[protein] + ADP + H(+). Inhibited by INKA1; which inhibits the serine/threonine-protein kinase activity by binding PAK4 in a substrate-like manner. Serine/threonine-protein kinase that plays a role in a variety of different signaling pathways including cytoskeleton regulation, cell adhesion turnover, cell migration, growth, proliferation or cell survival. Activation by various effectors including growth factor receptors or active CDC42 and RAC1 results in a conformational change and a subsequent autophosphorylation on several serine and/or threonine residues. Phosphorylates and inactivates the protein phosphatase SSH1, leading to increased inhibitory phosphorylation of the actin binding/depolymerizing factor cofilin. Decreased cofilin activity may lead to stabilization of actin filaments. Phosphorylates LIMK1, a kinase that also inhibits the activity of cofilin. Phosphorylates integrin beta5/ITGB5 and thus regulates cell motility. Phosphorylates ARHGEF2 and activates the downstream target RHOA that plays a role in the regulation of assembly of focal adhesions and actin stress fibers. Stimulates cell survival by phosphorylating the BCL2 antagonist of cell death BAD. Alternatively, inhibits apoptosis by preventing caspase-8 binding to death domain receptors in a kinase independent manner. Plays a role in cell-cycle progression by controlling levels of the cell-cycle regulatory protein CDKN1A and by phosphorylating RAN. Promotes kinase-independent stabilization of RHOU, thereby contributing to focal adhesion disassembly during cell migration. This chain is Serine/threonine-protein kinase PAK 4, found in Homo sapiens (Human).